Consider the following 405-residue polypeptide: Argininosuccinate synthase (405 aa).

12–20 (AYSGGLDTS) is a binding site for ATP. L-citrulline-binding residues include Tyr-90 and Ser-95. Residue Gly-120 participates in ATP binding. The L-aspartate site is built by Thr-122, Asn-126, and Asp-127. Residue Asn-126 participates in L-citrulline binding. Positions 130, 179, 188, 265, and 277 each coordinate L-citrulline.

This sequence belongs to the argininosuccinate synthase family. Type 1 subfamily. Homotetramer.

The protein resides in the cytoplasm. It carries out the reaction L-citrulline + L-aspartate + ATP = 2-(N(omega)-L-arginino)succinate + AMP + diphosphate + H(+). It functions in the pathway amino-acid biosynthesis; L-arginine biosynthesis; L-arginine from L-ornithine and carbamoyl phosphate: step 2/3. This is Argininosuccinate synthase from Clostridium perfringens (strain 13 / Type A).